A 449-amino-acid polypeptide reads, in one-letter code: MSTVIENLGKLDRKVTLAVPKAEVEQEKQSRLARLSKTVKMSGFRPGKVPMKMVEKQYGQQVEMEVRFDKAARQFFDITNEQGVKVAGQPRFELKSEGVADDQFAFDATFEVYPEVKIGDLAGAELTRTKTEITDAEIDKTIDILRKQRVHYHPRGEAGDHGDGGEAVAQNGDRVTVDFVGTIDGVEFAGGKAEGFGFVLGEGRMLPEFEQATLGLKQGESKVFPLAFPADYHGKDVAGKTAEFTVTLKQVEWAHLPEINGAFAQSLGIADGSLDKMRADIRENLEREVKRRTHALLKDQVMDALLKVAELDVPKSLIEQDQERLVEMARRDLEARGMPNVKNMPIPAEMFAQQAERRVKLGLVLAEVVKVNALEAKPEQIKAEIEEFAKSYEDPKEVIRWYYGDQQRLAEMEAYVLENNVVNFVCDKAKVADKAMSFEELTATQGAQG.

The region spanning Gly172–Pro257 is the PPIase FKBP-type domain.

The protein belongs to the FKBP-type PPIase family. Tig subfamily.

The protein localises to the cytoplasm. It carries out the reaction [protein]-peptidylproline (omega=180) = [protein]-peptidylproline (omega=0). In terms of biological role, involved in protein export. Acts as a chaperone by maintaining the newly synthesized protein in an open conformation. Functions as a peptidyl-prolyl cis-trans isomerase. This Ralstonia nicotianae (strain ATCC BAA-1114 / GMI1000) (Ralstonia solanacearum) protein is Trigger factor.